A 220-amino-acid polypeptide reads, in one-letter code: uncharacterized protein (220 aa).

This is an uncharacterized protein from Methanocaldococcus jannaschii (strain ATCC 43067 / DSM 2661 / JAL-1 / JCM 10045 / NBRC 100440) (Methanococcus jannaschii).